The primary structure comprises 69 residues: Putative membrane protein insertion efficiency factor (69 aa).

The protein belongs to the UPF0161 family.

It localises to the cell inner membrane. In terms of biological role, could be involved in insertion of integral membrane proteins into the membrane. The protein is Putative membrane protein insertion efficiency factor of Syntrophotalea carbinolica (strain DSM 2380 / NBRC 103641 / GraBd1) (Pelobacter carbinolicus).